Reading from the N-terminus, the 533-residue chain is 2-isopropylmalate synthase (533 aa).

In terms of domain architecture, Pyruvate carboxyltransferase spans 8–270; that stretch reads VIIFDTTLRD…YFNPFLGRPA (263 aa). Mn(2+) contacts are provided by Asp17, His209, His211, and Asn245. The tract at residues 409 to 533 is regulatory domain; the sequence is RLELVQVSCG…KEKTPEMLQV (125 aa).

Belongs to the alpha-IPM synthase/homocitrate synthase family. LeuA type 1 subfamily. As to quaternary structure, homodimer. Requires Mn(2+) as cofactor.

The protein localises to the cytoplasm. The enzyme catalyses 3-methyl-2-oxobutanoate + acetyl-CoA + H2O = (2S)-2-isopropylmalate + CoA + H(+). It functions in the pathway amino-acid biosynthesis; L-leucine biosynthesis; L-leucine from 3-methyl-2-oxobutanoate: step 1/4. Its function is as follows. Catalyzes the condensation of the acetyl group of acetyl-CoA with 3-methyl-2-oxobutanoate (2-ketoisovalerate) to form 3-carboxy-3-hydroxy-4-methylpentanoate (2-isopropylmalate). This chain is 2-isopropylmalate synthase, found in Microcystis aeruginosa.